The primary structure comprises 343 residues: MRVLGIETSCDETGVAIYDTERGLIADALHSQMAMHAEFGGVVPELASRDHTRKLLPLIRQVLDDAELRGDQLDAIAYTAGPGLVGALMVGASTAHGLARAWDIPALGVHHMEGHLLAPMLEAAPPDFPFVALLVSGGHTQLVEVHGLGRYRLLGESVDDAAGEAFDKAAKMLELPYPGGPHVAQLAERGDPTRFRFPRPMTDRPGLDFSFSGLKTHTLTTANQLKAAGPLSDQDRADIARAFEEAVVDTLVIKCRRALDTTGLKRLVVAGGVSANHRLRERLDRETAKRQAQAFYPRGRFCTDNGAMIAYVGAQRLLAGERDDATMQATPRWPLASLTPPAA.

Residues H111 and H115 each contribute to the Fe cation site. Residues 134–138, D167, G180, and N276 each bind substrate; that span reads LVSGG. D304 contributes to the Fe cation binding site.

Belongs to the KAE1 / TsaD family. Fe(2+) serves as cofactor.

The protein localises to the cytoplasm. It catalyses the reaction L-threonylcarbamoyladenylate + adenosine(37) in tRNA = N(6)-L-threonylcarbamoyladenosine(37) in tRNA + AMP + H(+). In terms of biological role, required for the formation of a threonylcarbamoyl group on adenosine at position 37 (t(6)A37) in tRNAs that read codons beginning with adenine. Is involved in the transfer of the threonylcarbamoyl moiety of threonylcarbamoyl-AMP (TC-AMP) to the N6 group of A37, together with TsaE and TsaB. TsaD likely plays a direct catalytic role in this reaction. This Chromohalobacter salexigens (strain ATCC BAA-138 / DSM 3043 / CIP 106854 / NCIMB 13768 / 1H11) protein is tRNA N6-adenosine threonylcarbamoyltransferase.